The sequence spans 148 residues: uncharacterized protein (148 aa).

Positions 1-23 (MKALVAVSAVAVVALLGVSSAQA) are cleaved as a signal peptide. Residues 22–45 (QADPEADPGAGEANYGGPPSSPRL) are disordered.

It to M.leprae ML2452.

This is an uncharacterized protein from Mycobacterium bovis (strain ATCC BAA-935 / AF2122/97).